A 337-amino-acid chain; its full sequence is N-acetyl-gamma-glutamyl-phosphate reductase (337 aa).

Cys-149 is an active-site residue.

This sequence belongs to the NAGSA dehydrogenase family. Type 1 subfamily.

The protein resides in the cytoplasm. The enzyme catalyses N-acetyl-L-glutamate 5-semialdehyde + phosphate + NADP(+) = N-acetyl-L-glutamyl 5-phosphate + NADPH + H(+). The protein operates within amino-acid biosynthesis; L-arginine biosynthesis; N(2)-acetyl-L-ornithine from L-glutamate: step 3/4. In terms of biological role, catalyzes the NADPH-dependent reduction of N-acetyl-5-glutamyl phosphate to yield N-acetyl-L-glutamate 5-semialdehyde. The sequence is that of N-acetyl-gamma-glutamyl-phosphate reductase from Wolinella succinogenes (strain ATCC 29543 / DSM 1740 / CCUG 13145 / JCM 31913 / LMG 7466 / NCTC 11488 / FDC 602W) (Vibrio succinogenes).